The chain runs to 715 residues: Fatty acid oxidation complex subunit alpha (715 aa).

Residues 1-190 (MTTTSAFMLN…KAGLVDDVVP (190 aa)) are enoyl-CoA hydratase. The 3-hydroxyacyl-CoA dehydrogenase stretch occupies residues 306–714 (GPLNSVGILG…FWTNGETDQG (409 aa)).

This sequence in the N-terminal section; belongs to the enoyl-CoA hydratase/isomerase family. The protein in the central section; belongs to the 3-hydroxyacyl-CoA dehydrogenase family. As to quaternary structure, heterotetramer of two alpha chains (FadJ) and two beta chains (FadI).

Its subcellular location is the cytoplasm. It carries out the reaction a (3S)-3-hydroxyacyl-CoA = a (2E)-enoyl-CoA + H2O. The enzyme catalyses a 4-saturated-(3S)-3-hydroxyacyl-CoA = a (3E)-enoyl-CoA + H2O. It catalyses the reaction a (3S)-3-hydroxyacyl-CoA + NAD(+) = a 3-oxoacyl-CoA + NADH + H(+). The catalysed reaction is (3S)-3-hydroxybutanoyl-CoA = (3R)-3-hydroxybutanoyl-CoA. Its pathway is lipid metabolism; fatty acid beta-oxidation. Functionally, catalyzes the formation of a hydroxyacyl-CoA by addition of water on enoyl-CoA. Also exhibits 3-hydroxyacyl-CoA epimerase and 3-hydroxyacyl-CoA dehydrogenase activities. In Salmonella typhimurium (strain LT2 / SGSC1412 / ATCC 700720), this protein is Fatty acid oxidation complex subunit alpha.